We begin with the raw amino-acid sequence, 387 residues long: Patatin-08 (387 aa).

Positions 1–23 (MATTKSFLILIVMILATTSSTFA) are cleaved as a signal peptide. One can recognise a PNPLA domain in the interval 32–230 (LSIDGGGIKG…TVADPALLSI (199 aa)). The GXGXXG signature appears at 36-41 (GGGIKG). The short motif at 75–79 (GTSTG) is the GXSXG element. Serine 77 functions as the Nucleophile in the catalytic mechanism. Asparagine 115 carries an N-linked (GlcNAc...) asparagine glycan. Aspartate 216 functions as the Proton acceptor in the catalytic mechanism. The DGA/G motif lies at 216–218 (DGA). Residues 361–385 (ETYEEALKRFAKLLSDRKKLRANKA) adopt a coiled-coil conformation.

It belongs to the patatin family. Tuber.

Its subcellular location is the vacuole. In terms of biological role, probable lipolytic acyl hydrolase (LAH), an activity which is thought to be involved in the response of tubers to pathogens. The polypeptide is Patatin-08 (Solanum tuberosum (Potato)).